The sequence spans 112 residues: Cytochrome c type-1 (112 aa).

4 residues coordinate heme c: C20, C23, H24, and M85.

Post-translationally, binds 1 heme c group covalently per subunit.

It is found in the mitochondrion intermembrane space. Its function is as follows. Electron carrier between complex III (ubiquinol-cytochrome c oxireductase) and complex IV (cytochrome c oxidase). The sequence is that of Cytochrome c type-1 from Ascaris suum (Pig roundworm).